The primary structure comprises 188 residues: Holliday junction branch migration complex subunit RuvA (188 aa).

The domain I stretch occupies residues 1 to 64 (MIAGISGRVL…QDGITLYGFS (64 aa)). A domain II region spans residues 65–143 (NERKKELFLS…SAGIKDMRIY (79 aa)). Position 143 (Y143) is a region of interest, flexible linker. Residues 143–188 (YHESLEALISLGYPEKQAREAVKHVYREGMKTSELIKEALKFLSQR) are domain III.

It belongs to the RuvA family. In terms of assembly, homotetramer. Forms an RuvA(8)-RuvB(12)-Holliday junction (HJ) complex. HJ DNA is sandwiched between 2 RuvA tetramers; dsDNA enters through RuvA and exits via RuvB. An RuvB hexamer assembles on each DNA strand where it exits the tetramer. Each RuvB hexamer is contacted by two RuvA subunits (via domain III) on 2 adjacent RuvB subunits; this complex drives branch migration. In the full resolvosome a probable DNA-RuvA(4)-RuvB(12)-RuvC(2) complex forms which resolves the HJ.

The protein resides in the cytoplasm. Its function is as follows. The RuvA-RuvB-RuvC complex processes Holliday junction (HJ) DNA during genetic recombination and DNA repair, while the RuvA-RuvB complex plays an important role in the rescue of blocked DNA replication forks via replication fork reversal (RFR). RuvA specifically binds to HJ cruciform DNA, conferring on it an open structure. The RuvB hexamer acts as an ATP-dependent pump, pulling dsDNA into and through the RuvAB complex. HJ branch migration allows RuvC to scan DNA until it finds its consensus sequence, where it cleaves and resolves the cruciform DNA. The sequence is that of Holliday junction branch migration complex subunit RuvA from Thermotoga petrophila (strain ATCC BAA-488 / DSM 13995 / JCM 10881 / RKU-1).